A 314-amino-acid polypeptide reads, in one-letter code: Hydroxyethylthiazole kinase (314 aa).

Substrate is bound at residue methionine 70. 2 residues coordinate ATP: arginine 145 and serine 217. Glycine 244 contributes to the substrate binding site.

This sequence belongs to the Thz kinase family. Mg(2+) is required as a cofactor.

It carries out the reaction 5-(2-hydroxyethyl)-4-methylthiazole + ATP = 4-methyl-5-(2-phosphooxyethyl)-thiazole + ADP + H(+). Its pathway is cofactor biosynthesis; thiamine diphosphate biosynthesis; 4-methyl-5-(2-phosphoethyl)-thiazole from 5-(2-hydroxyethyl)-4-methylthiazole: step 1/1. Functionally, catalyzes the phosphorylation of the hydroxyl group of 4-methyl-5-beta-hydroxyethylthiazole (THZ). The sequence is that of Hydroxyethylthiazole kinase from Bifidobacterium longum (strain DJO10A).